Here is a 79-residue protein sequence, read N- to C-terminus: Protein S100-G (79 aa).

Ser-2 is modified (N-acetylserine). EF-hand domains follow at residues 13-48 (IFEKYAAKEGDPDQLSKEELKLLIQNELPALLKGSS) and 45-79 (KGSSSIDDLFKELDKNGDGEVSFEEFQVLVKKISQ). Ca(2+)-binding residues include Gln-26 and Glu-31. The residue at position 47 (Ser-47) is a Phosphoserine. Ca(2+)-binding residues include Asp-58, Asn-60, Asp-62, Glu-64, and Glu-69.

The protein belongs to the S-100 family.

In Equus caballus (Horse), this protein is Protein S100-G (S100G).